The sequence spans 326 residues: MSQYVVCALYKFVELNNYQELREPLLALMEKHHIRGTLLLAGEGINGTVASDRAGIDTLLEWLNTEPRLTGTVYKESYSETQPFNRTKVKLKKEIVTLGVEGIDPRHVVGTYVKPQDWNDLIADPEVFVVDTRNDYEIEIGTFKGAVNPNTETFREFPDYVKENMDPAKHKKVAMFCTGGIRCEKSTAYMKEQGFEEVYHLEGGILKYLEEVPQEESMWEGDCYVFDGRVAVNHQLEKADYDLCNACRLPITDEDKQSELFEQGVSCPKCHGKHSEEQVERFREREKQVSLANQRGEQHVGGESAKQRAQRREAKLAKKAAQRKQA.

Positions 123 to 217 (ADPEVFVVDT…YLEEVPQEES (95 aa)) constitute a Rhodanese domain. Cys-177 serves as the catalytic Cysteine persulfide intermediate. Basic and acidic residues predominate over residues 278-288 (QVERFREREKQ). Positions 278–326 (QVERFREREKQVSLANQRGEQHVGGESAKQRAQRREAKLAKKAAQRKQA) are disordered. Over residues 317–326 (AKKAAQRKQA) the composition is skewed to basic residues.

The protein belongs to the TrhO family.

It carries out the reaction uridine(34) in tRNA + AH2 + O2 = 5-hydroxyuridine(34) in tRNA + A + H2O. Functionally, catalyzes oxygen-dependent 5-hydroxyuridine (ho5U) modification at position 34 in tRNAs. This is tRNA uridine(34) hydroxylase from Vibrio parahaemolyticus serotype O3:K6 (strain RIMD 2210633).